A 368-amino-acid chain; its full sequence is Glutaminyl-peptide cyclotransferase (368 aa).

A signal peptide spans 1-33 (MARERRDSKAATFFCLAWALCLALPGFPQHVSG). Asparagine 53 carries N-linked (GlcNAc...) asparagine glycosylation. A disulfide bridge links cysteine 143 with cysteine 169. Residue aspartate 164 coordinates Zn(2+). The active-site Proton acceptor is the glutamate 207. A Zn(2+)-binding site is contributed by glutamate 208. The active-site Proton acceptor is aspartate 254. N-linked (GlcNAc...) asparagine glycosylation is present at asparagine 292. Histidine 336 contacts Zn(2+). N-linked (GlcNAc...) asparagine glycosylation occurs at asparagine 352.

It belongs to the glutaminyl-peptide cyclotransferase family. Expressed by the venom gland.

Its subcellular location is the secreted. It catalyses the reaction N-terminal L-glutaminyl-[peptide] = N-terminal 5-oxo-L-prolyl-[peptide] + NH4(+). In terms of biological role, responsible for the biosynthesis of pyroglutamyl peptides. Has a bias against acidic and tryptophan residues adjacent to the N-terminal glutaminyl residue and a lack of importance of chain length after the second residue. Also catalyzes N-terminal pyroglutamate formation. The protein is Glutaminyl-peptide cyclotransferase (QPCT) of Gloydius blomhoffii (Mamushi).